Here is a 202-residue protein sequence, read N- to C-terminus: Small ribosomal subunit protein uS5 (202 aa).

Residues 50–113 form the S5 DRBM domain; that stretch reads LKQELLNVNI…REAKLNLIPV (64 aa).

The protein belongs to the universal ribosomal protein uS5 family. As to quaternary structure, part of the 30S ribosomal subunit. Contacts protein S4.

Its function is as follows. With S4 and S12 plays an important role in translational accuracy. This is Small ribosomal subunit protein uS5 from Pyrobaculum arsenaticum (strain DSM 13514 / JCM 11321 / PZ6).